A 431-amino-acid chain; its full sequence is Histidinol dehydrogenase (431 aa).

Residues Tyr-130, Gln-191, and Asn-214 each contribute to the NAD(+) site. Residues Ser-237, Gln-259, and His-262 each contribute to the substrate site. Zn(2+) is bound by residues Gln-259 and His-262. Catalysis depends on proton acceptor residues Glu-327 and His-328. Positions 328, 361, 415, and 420 each coordinate substrate. Asp-361 is a binding site for Zn(2+). His-420 is a binding site for Zn(2+).

The protein belongs to the histidinol dehydrogenase family. Requires Zn(2+) as cofactor.

The enzyme catalyses L-histidinol + 2 NAD(+) + H2O = L-histidine + 2 NADH + 3 H(+). The protein operates within amino-acid biosynthesis; L-histidine biosynthesis; L-histidine from 5-phospho-alpha-D-ribose 1-diphosphate: step 9/9. Catalyzes the sequential NAD-dependent oxidations of L-histidinol to L-histidinaldehyde and then to L-histidine. The chain is Histidinol dehydrogenase from Syntrophotalea carbinolica (strain DSM 2380 / NBRC 103641 / GraBd1) (Pelobacter carbinolicus).